Reading from the N-terminus, the 169-residue chain is S-ribosylhomocysteine lyase (169 aa).

Fe cation contacts are provided by His54, His58, and Cys129.

The protein belongs to the LuxS family. Homodimer. The cofactor is Fe cation.

The catalysed reaction is S-(5-deoxy-D-ribos-5-yl)-L-homocysteine = (S)-4,5-dihydroxypentane-2,3-dione + L-homocysteine. In terms of biological role, involved in the synthesis of autoinducer 2 (AI-2) which is secreted by bacteria and is used to communicate both the cell density and the metabolic potential of the environment. The regulation of gene expression in response to changes in cell density is called quorum sensing. Catalyzes the transformation of S-ribosylhomocysteine (RHC) to homocysteine (HC) and 4,5-dihydroxy-2,3-pentadione (DPD). This Actinobacillus pleuropneumoniae serotype 5b (strain L20) protein is S-ribosylhomocysteine lyase.